Here is a 163-residue protein sequence, read N- to C-terminus: SsrA-binding protein (163 aa).

The protein belongs to the SmpB family.

It localises to the cytoplasm. Required for rescue of stalled ribosomes mediated by trans-translation. Binds to transfer-messenger RNA (tmRNA), required for stable association of tmRNA with ribosomes. tmRNA and SmpB together mimic tRNA shape, replacing the anticodon stem-loop with SmpB. tmRNA is encoded by the ssrA gene; the 2 termini fold to resemble tRNA(Ala) and it encodes a 'tag peptide', a short internal open reading frame. During trans-translation Ala-aminoacylated tmRNA acts like a tRNA, entering the A-site of stalled ribosomes, displacing the stalled mRNA. The ribosome then switches to translate the ORF on the tmRNA; the nascent peptide is terminated with the 'tag peptide' encoded by the tmRNA and targeted for degradation. The ribosome is freed to recommence translation, which seems to be the essential function of trans-translation. This Buchnera aphidicola subsp. Schizaphis graminum (strain Sg) protein is SsrA-binding protein.